Here is an 834-residue protein sequence, read N- to C-terminus: Probable receptor-like protein kinase At2g23200 (834 aa).

Residues 1-28 form the signal peptide; the sequence is MENFCFQDSVSLFITIMVLVLLPRLSLS. The Extracellular portion of the chain corresponds to 29–405; sequence DTSTYTRPEN…SSSRVHIITG (377 aa). 10 N-linked (GlcNAc...) asparagine glycosylation sites follow: Asn61, Asn149, Asn221, Asn246, Asn277, Asn289, Asn314, Asn352, Asn361, and Asn394. Residues 406–426 form a helical membrane-spanning segment; it reads CAVAAAAASALVFSLLFMVFL. Residues 427 to 834 are Cytoplasmic-facing; the sequence is KRRRSKKTKP…FSQLKISDAR (408 aa). Positions 488–761 constitute a Protein kinase domain; that stretch reads FDEQLLIGKG…RDVIWDLEYV (274 aa). ATP is bound by residues 494–502 and Lys516; that span reads IGKGGFGYV. Asp613 acts as the Proton acceptor in catalysis.

It belongs to the protein kinase superfamily. Ser/Thr protein kinase family.

The protein resides in the membrane. The polypeptide is Probable receptor-like protein kinase At2g23200 (Arabidopsis thaliana (Mouse-ear cress)).